Reading from the N-terminus, the 196-residue chain is ATP-dependent Clp protease proteolytic subunit (196 aa).

The active-site Nucleophile is the serine 96. Histidine 121 is a catalytic residue.

Belongs to the peptidase S14 family. Fourteen ClpP subunits assemble into 2 heptameric rings which stack back to back to give a disk-like structure with a central cavity, resembling the structure of eukaryotic proteasomes.

It localises to the cytoplasm. The enzyme catalyses Hydrolysis of proteins to small peptides in the presence of ATP and magnesium. alpha-casein is the usual test substrate. In the absence of ATP, only oligopeptides shorter than five residues are hydrolyzed (such as succinyl-Leu-Tyr-|-NHMec, and Leu-Tyr-Leu-|-Tyr-Trp, in which cleavage of the -Tyr-|-Leu- and -Tyr-|-Trp bonds also occurs).. Cleaves peptides in various proteins in a process that requires ATP hydrolysis. Has a chymotrypsin-like activity. Plays a major role in the degradation of misfolded proteins. The sequence is that of ATP-dependent Clp protease proteolytic subunit from Streptococcus agalactiae serotype III (strain NEM316).